Here is a 227-residue protein sequence, read N- to C-terminus: Glutathione S-transferase U17 (227 aa).

Residues 4-83 form the GST N-terminal domain; the sequence is SDVKLIGAWA…YIDDTWSSSG (80 aa). Glutathione is bound by residues 14–15, 40–41, 54–55, and 67–68; these read SP, SK, KI, and ES. One can recognise a GST C-terminal domain in the interval 90 to 222; the sequence is DPYDRAMARF…KLAEFAKKIF (133 aa).

This sequence belongs to the GST superfamily. Tau family.

The protein localises to the cytoplasm. It localises to the cytosol. The enzyme catalyses RX + glutathione = an S-substituted glutathione + a halide anion + H(+). Involved in light signaling, mainly phyA-mediated photomorphogenesis and in the integration of various phytohormone signals to modulate various aspects of plant development by affecting glutathione pools. In vitro, possesses glutathione S-transferase activity toward 1-chloro-2,4-dinitrobenzene (CDNB) and benzyl isothiocyanate (BITC). The sequence is that of Glutathione S-transferase U17 (GSTU17) from Arabidopsis thaliana (Mouse-ear cress).